Here is a 112-residue protein sequence, read N- to C-terminus: Ribosome-binding factor A (112 aa).

It belongs to the RbfA family. Monomer. Binds 30S ribosomal subunits, but not 50S ribosomal subunits or 70S ribosomes.

The protein resides in the cytoplasm. Functionally, one of several proteins that assist in the late maturation steps of the functional core of the 30S ribosomal subunit. Associates with free 30S ribosomal subunits (but not with 30S subunits that are part of 70S ribosomes or polysomes). Required for efficient processing of 16S rRNA. May interact with the 5'-terminal helix region of 16S rRNA. The protein is Ribosome-binding factor A of Mycoplasmopsis pulmonis (strain UAB CTIP) (Mycoplasma pulmonis).